The chain runs to 449 residues: Elongation factor 1-alpha (449 aa).

The tr-type G domain maps to 5-230 (KVHINIVVIG…DQIQEPKRPS (226 aa)). The interval 14–21 (GHVDSGKS) is G1. Position 14–21 (14–21 (GHVDSGKS)) interacts with GTP. Lys-55 carries the N6,N6-dimethyllysine modification. A G2 region spans residues 70-74 (GITID). N6,N6,N6-trimethyllysine is present on Lys-79. A G3 region spans residues 91–94 (DAPG). GTP is bound by residues 91-95 (DAPGH) and 153-156 (NKMD). The G4 stretch occupies residues 153 to 156 (NKMD). Residue Lys-187 is modified to N6,N6,N6-trimethyllysine. Positions 194-196 (SGF) are G5. Lys-261 bears the N6-methyllysine mark. A 5-glutamyl glycerylphosphorylethanolamine modification is found at Glu-289. N6,N6,N6-trimethyllysine is present on Lys-306. Glu-362 carries the 5-glutamyl glycerylphosphorylethanolamine modification. Position 396 is an N6,N6,N6-trimethyllysine (Lys-396).

This sequence belongs to the TRAFAC class translation factor GTPase superfamily. Classic translation factor GTPase family. EF-Tu/EF-1A subfamily.

Its subcellular location is the cytoplasm. In terms of biological role, this protein promotes the GTP-dependent binding of aminoacyl-tRNA to the A-site of ribosomes during protein biosynthesis. This chain is Elongation factor 1-alpha (EF1), found in Manihot esculenta (Cassava).